The following is a 309-amino-acid chain: Protein RTM1 (309 aa).

The next 7 helical transmembrane spans lie at 22 to 42 (AIALTVLFIVTTLIYSLQVVW), 83 to 103 (TFSAFIPLFFGCIMEIVGYIA), 119 to 139 (IQAVLLLIAPALYAATIYMLF), 162 to 182 (FFVFGDVVSFCLQAAGGGLMA), 193 to 213 (LITAGLVIQIVFFGVFIINEF), 233 to 253 (WWFLNLTLMLSSILIMVRSIV), and 278 to 298 (AVPMLLAAIVFIVGSFFGNIF).

The protein belongs to the lipid-translocating exporter (LTE) (TC 9.A.26.1) family.

The protein localises to the membrane. In terms of biological role, confers resistance to molasses (to a particular toxic element present in some molasses). In Saccharomyces cerevisiae (Baker's yeast), this protein is Protein RTM1 (RTM1).